The primary structure comprises 125 residues: uncharacterized protein (125 aa).

Belongs to the HesB/IscA family.

This is an uncharacterized protein from Azospirillum brasilense.